The primary structure comprises 223 residues: Rab-like protein 2A (223 aa).

Residues 28-35, 76-80, and 133-136 contribute to the GTP site; these read GDSAVGKS, DTAGQ, and NKID. Residues 200-223 are disordered; the sequence is KLEQKEEDTSGQEQSDTTKSPSPS. The segment covering 210-223 has biased composition (polar residues); it reads GQEQSDTTKSPSPS.

The protein belongs to the small GTPase superfamily. Rab family. Interacts with IFT27, IFT81, IFT172, ATP6V1E1, HK1, LDHC, MAPRE1 and HSPA2. Isoform 2 is expressed in the testis and localizes to the mid-piece of the sperm tail (at protein level). Isoform 2 is expressed at higher levels in testis than isoform 1. Isoform 1 and isoform 2 are widely expressed and notably within other tissues containing motile cilia including the lung, trachea, brain, ovary and kidney.

In terms of biological role, plays an essential role in male fertility, sperm intra-flagellar transport, and tail assembly. Binds, in a GTP-regulated manner, to a specific set of effector proteins including key proteins involved in cilia development and function and delivers them into the growing sperm tail. This is Rab-like protein 2A (Rabl2) from Mus musculus (Mouse).